The primary structure comprises 316 residues: MLTQLKKNGTEVSRATALFSSFVEKNKVKCPGNVKKFVFLCGANKNNGEPSARRLELINFSERYLNNCHFFLAELVFKELSTDEESLSDNLLDIEADLSKLADHIIIVLESYSSFTELGAFAYSKQLRKKLIIVNNTKFINEKSFINMGPIKAITQQSQQSGHFLHYKMTEGIESIERSDGIGEIFDPLYDILSKNDRAISRTLKKEELDPSSNFNKDSVRFIHDVIFVCGPLQLNELIEIITKIFGTESHYKKNLLKHLGILIAIRIISCTNGIYYSLYKEYYFKYDFDIDNISSMFKVFFLKNKPERMRVYENI.

In terms of biological role, possible ribosyltransferase/DNA-binding component of antiviral defense system retron Ec73, composed of a non-coding RNA (ncRNA) followed by this protein then a reverse transcriptase (RT). Expression of this retron confers protection against bacteriophages SECphi4, SECphi6, SECphi27 and P1. At multiplicity of infection (MOI) of 0.02 cultures grow normally when infected with SECphi4 without collapsing, at MOI 2 cultures enter growth stasis. The chain is Retron Ec73 putative ribosyltransferase/DNA-binding protein from Escherichia coli.